A 280-amino-acid chain; its full sequence is Energy-coupling factor transporter ATP-binding protein EcfA2 (280 aa).

Residues 3 to 245 form the ABC transporter domain; that stretch reads INLQNVSYTY…VSLLEKKQLG (243 aa). 40–47 is a binding site for ATP; it reads GHTGSGKS.

This sequence belongs to the ABC transporter superfamily. Energy-coupling factor EcfA family. Forms a stable energy-coupling factor (ECF) transporter complex composed of 2 membrane-embedded substrate-binding proteins (S component), 2 ATP-binding proteins (A component) and 2 transmembrane proteins (T component).

Its subcellular location is the cell membrane. Functionally, ATP-binding (A) component of a common energy-coupling factor (ECF) ABC-transporter complex. Unlike classic ABC transporters this ECF transporter provides the energy necessary to transport a number of different substrates. The sequence is that of Energy-coupling factor transporter ATP-binding protein EcfA2 from Streptococcus pyogenes serotype M1.